A 233-amino-acid chain; its full sequence is Transcriptional regulatory protein PrrA (233 aa).

The Response regulatory domain occupies 9–123 (RVLVVDDDSD…ELVARVKALL (115 aa)). Residue Asp-58 is modified to 4-aspartylphosphate. The segment at residues 134–232 (SETITVGPLE…VRGVGFVLRM (99 aa)) is a DNA-binding region (ompR/PhoB-type).

Phosphorylated by PrrB at Asp-58.

Its subcellular location is the cytoplasm. Its function is as follows. Member of the two-component regulatory system PrrB/PrrA that is involved specifically in early intracellular multiplication of Mycobacterium and is essential for its viability. Upon phosphorylation by PrrB, functions as a transcription regulator by direct binding to promoter regions of target genes to positively regulate their expression. Autoregulates its own expression. The chain is Transcriptional regulatory protein PrrA (prrA) from Mycobacterium bovis (strain ATCC BAA-935 / AF2122/97).